Reading from the N-terminus, the 558-residue chain is Pyrethroid hydrolase Ces2a (558 aa).

Residues 1–26 form the signal peptide; that stretch reads MPLARLPGWLCVVACGLLLLLQHVHG. Cysteine 95 and cysteine 122 are oxidised to a cystine. Lysine 209 bears the N6-succinyllysine mark. The Acyl-ester intermediate role is filled by serine 227. N-linked (GlcNAc...) asparagine glycosylation is present at asparagine 275. The cysteines at positions 279 and 290 are disulfide-linked. Lysine 296 is subject to N6-succinyllysine. The active-site Charge relay system is glutamate 344. N-linked (GlcNAc...) asparagine glycosylation is present at asparagine 361. The active-site Charge relay system is histidine 456.

The protein belongs to the type-B carboxylesterase/lipase family.

Its subcellular location is the microsome. It carries out the reaction (-)-trans-permethrin + H2O = (3-phenoxyphenyl)methanol + (1S,3R)-3-(2,2-dichlorovinyl)-2,2-dimethylcyclopropanecarboxylate + H(+). The enzyme catalyses all-trans-retinyl hexadecanoate + H2O = all-trans-retinol + hexadecanoate + H(+). Functionally, carboxylesterases that catalyzes the hydrolysis of pyrethroids pesticides. Hydrolyzes permethrin faster than cypermethrin. Hydrolyzes retinyl esters. This is Pyrethroid hydrolase Ces2a from Mus musculus (Mouse).